Reading from the N-terminus, the 162-residue chain is Autophagy-related protein 8 (162 aa).

A compositionally biased stretch (basic and acidic residues) spans 1-27; the sequence is MRSKFKDEHPFEKRKAEAERIRQKYSD. Residues 1-42 form a disordered region; the sequence is MRSKFKDEHPFEKRKAEAERIRQKYSDRIPPSPHSPASRLIG. Residue G157 is the site of Phosphatidylethanolamine amidated glycine attachment. Residues 158–162 constitute a propeptide, removed in mature form; that stretch reads GFETA.

This sequence belongs to the ATG8 family.

It is found in the cytoplasmic vesicle. It localises to the autophagosome membrane. The protein resides in the vacuole membrane. Ubiquitin-like modifier involved in autophagosome formation. With ATG4, mediates the delivery of the autophagosomes to the vacuole via the microtubule cytoskeleton. Required for selective autophagic degradation of the nucleus (nucleophagy) as well as for mitophagy which contributes to regulate mitochondrial quantity and quality by eliminating the mitochondria to a basal level to fulfill cellular energy requirements and preventing excess ROS production. Also participates in membrane fusion events that take place in the early secretory pathway. Also involved in endoplasmic reticulum-specific autophagic process and is essential for the survival of cells subjected to severe ER stress. The ATG8-PE conjugate mediates tethering between adjacent membranes and stimulates membrane hemifusion, leading to expansion of the autophagosomal membrane during autophagy. This Colletotrichum higginsianum (strain IMI 349063) (Crucifer anthracnose fungus) protein is Autophagy-related protein 8.